A 359-amino-acid chain; its full sequence is AA9 family lytic polysaccharide monooxygenase B (359 aa).

An N-terminal signal peptide occupies residues 1–18 (MQLFTSFSLLAVASFASA). Positions 19 and 102 each coordinate Cu(2+). Cystine bridges form between Cys72–Cys190 and Cys113–Cys117. N-linked (GlcNAc...) asparagine glycosylation is present at Asn150. O2 contacts are provided by His176 and Gln185. Tyr187 is a binding site for Cu(2+). The tract at residues 241–310 (GGSPGNSAEP…STNINPTSLK (70 aa)) is disordered. Over residues 245–254 (GNSAEPQPQH) the composition is skewed to polar residues. The segment covering 255–304 (TSTAVSTAKTASTSSLTTSVTITSQAPSNTANPPQSITTTTTPKPQSTNI) has biased composition (low complexity). A glycan (N-linked (GlcNAc...) asparagine) is linked at Asn345.

It belongs to the polysaccharide monooxygenase AA9 family. Cu(2+) serves as cofactor.

It localises to the secreted. The catalysed reaction is [(1-&gt;4)-beta-D-glucosyl]n+m + reduced acceptor + O2 = 4-dehydro-beta-D-glucosyl-[(1-&gt;4)-beta-D-glucosyl]n-1 + [(1-&gt;4)-beta-D-glucosyl]m + acceptor + H2O.. Its function is as follows. Lytic polysaccharide monooxygenase (LPMO) that depolymerizes crystalline and amorphous polysaccharides via the oxidation of scissile alpha- or beta-(1-4)-glycosidic bonds, yielding C1 and C4 oxidation products. Catalysis by LPMOs requires the reduction of the active-site copper from Cu(II) to Cu(I) by a reducing agent and H(2)O(2) or O(2) as a cosubstrate. Active on cellulose and on xyloglucan for deconstruction of plant biomass. The protein is AA9 family lytic polysaccharide monooxygenase B of Geotrichum candidum (Oospora lactis).